The sequence spans 537 residues: 5,6-dihydroxyindole-2-carboxylic acid oxidase (537 aa).

A signal peptide spans 1–24; the sequence is MKSYNVLPLAYISLFLMLFYQVWA. The Lumenal, melanosome portion of the chain corresponds to 25 to 477; it reads QFPRECANIE…WPGQEFTVSE (453 aa). Intrachain disulfides connect C30–C41, C42–C65, C56–C99, C101–C110, and C113–C122. Residues N96 and N104 are each glycosylated (N-linked (GlcNAc...) asparagine). N181 is a glycosylation site (N-linked (GlcNAc...) asparagine). Zn(2+) is bound by residues H192, H215, and H224. Cystine bridges form between C258–C261 and C290–C303. N304 and N350 each carry an N-linked (GlcNAc...) asparagine glycan. 2 residues coordinate Zn(2+): H377 and H381. The N-linked (GlcNAc...) asparagine glycan is linked to N385. H404 provides a ligand contact to Zn(2+). The helical transmembrane segment at 478 to 501 threads the bilayer; it reads IITIAVVAALLLVAAIFGVASCLI. The Cytoplasmic portion of the chain corresponds to 502 to 537; the sequence is RSRSTKNEANQPLLTDHYQRYAEDYEELPNPNHSMV.

It belongs to the tyrosinase family. In terms of assembly, monomer. Interacts with ATP7A. Interacts with SLC45A2. Requires Cu(2+) as cofactor. Zn(2+) serves as cofactor. In terms of processing, glycosylated. As to expression, pigment cells.

Its subcellular location is the melanosome membrane. The catalysed reaction is 2 5,6-dihydroxyindole-2-carboxylate + O2 = 2 indole-5,6-quinone-2-carboxylate + 2 H2O. Its pathway is pigment biosynthesis; melanin biosynthesis. In terms of biological role, plays a role in melanin biosynthesis. Catalyzes the oxidation of 5,6-dihydroxyindole-2-carboxylic acid (DHICA) into indole-5,6-quinone-2-carboxylic acid. May regulate or influence the type of melanin synthesized. Also to a lower extent, capable of hydroxylating tyrosine and producing melanin. This Mus musculus (Mouse) protein is 5,6-dihydroxyindole-2-carboxylic acid oxidase (Tyrp1).